The chain runs to 169 residues: Thermonuclease (169 aa).

The N-terminal stretch at 1–26 is a signal peptide; the sequence is MKKITTGLIIVVAAIIVLSIQFMTES. Residues arginine 65, glutamate 73, and arginine 115 contribute to the active site.

The protein belongs to the thermonuclease family. Requires Ca(2+) as cofactor.

It is found in the secreted. It catalyses the reaction Endonucleolytic cleavage to nucleoside 3'-phosphates and 3'-phosphooligonucleotide end-products.. Enzyme that catalyzes the hydrolysis of both DNA and RNA at the 5'-position of the phosphodiester bond. The protein is Thermonuclease (nucH) of Staphylococcus hyicus.